A 286-amino-acid chain; its full sequence is Phosphatidylserine decarboxylase proenzyme (286 aa).

Residues aspartate 90, histidine 147, and serine 250 each act as charge relay system; for autoendoproteolytic cleavage activity in the active site. Serine 250 serves as the catalytic Schiff-base intermediate with substrate; via pyruvic acid; for decarboxylase activity. Residue serine 250 is modified to Pyruvic acid (Ser); by autocatalysis.

The protein belongs to the phosphatidylserine decarboxylase family. PSD-B subfamily. Prokaryotic type I sub-subfamily. In terms of assembly, heterodimer of a large membrane-associated beta subunit and a small pyruvoyl-containing alpha subunit. Requires pyruvate as cofactor. Is synthesized initially as an inactive proenzyme. Formation of the active enzyme involves a self-maturation process in which the active site pyruvoyl group is generated from an internal serine residue via an autocatalytic post-translational modification. Two non-identical subunits are generated from the proenzyme in this reaction, and the pyruvate is formed at the N-terminus of the alpha chain, which is derived from the carboxyl end of the proenzyme. The autoendoproteolytic cleavage occurs by a canonical serine protease mechanism, in which the side chain hydroxyl group of the serine supplies its oxygen atom to form the C-terminus of the beta chain, while the remainder of the serine residue undergoes an oxidative deamination to produce ammonia and the pyruvoyl prosthetic group on the alpha chain. During this reaction, the Ser that is part of the protease active site of the proenzyme becomes the pyruvoyl prosthetic group, which constitutes an essential element of the active site of the mature decarboxylase.

It is found in the cell membrane. The enzyme catalyses a 1,2-diacyl-sn-glycero-3-phospho-L-serine + H(+) = a 1,2-diacyl-sn-glycero-3-phosphoethanolamine + CO2. Its pathway is phospholipid metabolism; phosphatidylethanolamine biosynthesis; phosphatidylethanolamine from CDP-diacylglycerol: step 2/2. Catalyzes the formation of phosphatidylethanolamine (PtdEtn) from phosphatidylserine (PtdSer). This chain is Phosphatidylserine decarboxylase proenzyme, found in Saccharophagus degradans (strain 2-40 / ATCC 43961 / DSM 17024).